We begin with the raw amino-acid sequence, 499 residues long: Glycerol kinase (499 aa).

Threonine 12 serves as a coordination point for ADP. Residues threonine 12, threonine 13, and serine 14 each contribute to the ATP site. Residue threonine 12 participates in sn-glycerol 3-phosphate binding. Arginine 16 lines the ADP pocket. Positions 82, 83, 134, and 245 each coordinate sn-glycerol 3-phosphate. 5 residues coordinate glycerol: arginine 82, glutamate 83, tyrosine 134, aspartate 245, and glutamine 246. The ADP site is built by threonine 267 and glycine 311. ATP is bound by residues threonine 267, glycine 311, glutamine 315, and glycine 412. Glycine 412 and asparagine 416 together coordinate ADP.

This sequence belongs to the FGGY kinase family.

The enzyme catalyses glycerol + ATP = sn-glycerol 3-phosphate + ADP + H(+). The protein operates within polyol metabolism; glycerol degradation via glycerol kinase pathway; sn-glycerol 3-phosphate from glycerol: step 1/1. With respect to regulation, inhibited by fructose 1,6-bisphosphate (FBP). In terms of biological role, key enzyme in the regulation of glycerol uptake and metabolism. Catalyzes the phosphorylation of glycerol to yield sn-glycerol 3-phosphate. The protein is Glycerol kinase of Acidiphilium cryptum (strain JF-5).